The sequence spans 66 residues: UPF0337 protein SpyM3_1723 (66 aa).

The span at 1-10 (MSEEKLKSKI) shows a compositional bias: basic and acidic residues. The disordered stretch occupies residues 1 to 23 (MSEEKLKSKIEQASGGLKEGAGK).

Belongs to the UPF0337 (CsbD) family.

The polypeptide is UPF0337 protein SpyM3_1723 (Streptococcus pyogenes serotype M3 (strain ATCC BAA-595 / MGAS315)).